Here is a 209-residue protein sequence, read N- to C-terminus: ATP-dependent Clp protease proteolytic subunit (209 aa).

Serine 106 acts as the Nucleophile in catalysis. Histidine 131 is an active-site residue.

It belongs to the peptidase S14 family. As to quaternary structure, fourteen ClpP subunits assemble into 2 heptameric rings which stack back to back to give a disk-like structure with a central cavity, resembling the structure of eukaryotic proteasomes.

It localises to the cytoplasm. The catalysed reaction is Hydrolysis of proteins to small peptides in the presence of ATP and magnesium. alpha-casein is the usual test substrate. In the absence of ATP, only oligopeptides shorter than five residues are hydrolyzed (such as succinyl-Leu-Tyr-|-NHMec, and Leu-Tyr-Leu-|-Tyr-Trp, in which cleavage of the -Tyr-|-Leu- and -Tyr-|-Trp bonds also occurs).. Functionally, cleaves peptides in various proteins in a process that requires ATP hydrolysis. Has a chymotrypsin-like activity. Plays a major role in the degradation of misfolded proteins. The chain is ATP-dependent Clp protease proteolytic subunit from Brucella melitensis biotype 2 (strain ATCC 23457).